Consider the following 322-residue polypeptide: Cytochrome f (322 aa).

Positions 1–37 are cleaved as a signal peptide; the sequence is MQNRKTYAYDWIKKWMIKSISTLIIINTMVWSSVSEA. The heme site is built by Tyr-38, Cys-58, Cys-61, and His-62. The chain crosses the membrane as a helical span at residues 285–307; the sequence is VLRVQGLLLFFASVILAQIFLVL.

Belongs to the cytochrome f family. In terms of assembly, the 4 large subunits of the cytochrome b6-f complex are cytochrome b6, subunit IV (17 kDa polypeptide, petD), cytochrome f and the Rieske protein, while the 4 small subunits are PetG, PetL, PetM and PetN. The complex functions as a dimer. Requires heme as cofactor.

Its subcellular location is the plastid. It localises to the chloroplast thylakoid membrane. Functionally, component of the cytochrome b6-f complex, which mediates electron transfer between photosystem II (PSII) and photosystem I (PSI), cyclic electron flow around PSI, and state transitions. This chain is Cytochrome f (petA), found in Anthoceros angustus (Hornwort).